The following is a 476-amino-acid chain: Doublesex- and mab-3-related transcription factor 3 (476 aa).

The segment at residues 29-76 (CARCRNHGVLSWLKGHKRYCRFKDCTCEKCILIIERQRVMAAQVALRR) is a DNA-binding region (DM). Disordered regions lie at residues 89 to 130 (DSLR…RPTA) and 147 to 195 (GTLP…SKNC). The span at 102–121 (DAAATAATASQSSPASQASQ) shows a compositional bias: low complexity. Polar residues predominate over residues 165–174 (DSSSTDNTAE). A compositionally biased stretch (basic and acidic residues) spans 176 to 185 (FSDKDTDQRS). Residues 255–290 (RPPLEVLKKIFPNQKPTVLELILKGCGGDLVSAVEV) enclose the DMA domain. Positions 418-432 (NSTSVFRSSPVLSSR) are enriched in polar residues. A disordered region spans residues 418-476 (NSTSVFRSSPVLSSRTTEDPRISIPDDGCPIVTKQSIYTEDDYDERSDSSDSRILNTSS).

The protein belongs to the DMRT family. As to expression, expressed in the ventral spinal cord, in a restrical population of neurons migrating ventrically in the developing spinal cord at 11.5 dpc.

Its subcellular location is the nucleus. Probable transcription factor that plays a role in configuring the spinal circuits controlling stride in vertebrates. Involved in neuronal specification within specific subdivision of spinal cord neurons and in the development of a coordinated locomotor network controlling limb movements. May regulate transcription during sexual development. The polypeptide is Doublesex- and mab-3-related transcription factor 3 (Dmrt3) (Mus musculus (Mouse)).